A 483-amino-acid chain; its full sequence is Protein nucleotidyltransferase YdiU (483 aa).

Residues glycine 87, glycine 89, arginine 90, lysine 110, aspartate 122, glycine 123, arginine 173, and arginine 180 each contribute to the ATP site. Aspartate 249 (proton acceptor) is an active-site residue. Mg(2+) is bound by residues asparagine 250 and aspartate 259. Aspartate 259 contributes to the ATP binding site.

This sequence belongs to the SELO family. Mg(2+) is required as a cofactor. It depends on Mn(2+) as a cofactor.

The catalysed reaction is L-seryl-[protein] + ATP = 3-O-(5'-adenylyl)-L-seryl-[protein] + diphosphate. The enzyme catalyses L-threonyl-[protein] + ATP = 3-O-(5'-adenylyl)-L-threonyl-[protein] + diphosphate. It carries out the reaction L-tyrosyl-[protein] + ATP = O-(5'-adenylyl)-L-tyrosyl-[protein] + diphosphate. It catalyses the reaction L-histidyl-[protein] + UTP = N(tele)-(5'-uridylyl)-L-histidyl-[protein] + diphosphate. The catalysed reaction is L-seryl-[protein] + UTP = O-(5'-uridylyl)-L-seryl-[protein] + diphosphate. The enzyme catalyses L-tyrosyl-[protein] + UTP = O-(5'-uridylyl)-L-tyrosyl-[protein] + diphosphate. Nucleotidyltransferase involved in the post-translational modification of proteins. It can catalyze the addition of adenosine monophosphate (AMP) or uridine monophosphate (UMP) to a protein, resulting in modifications known as AMPylation and UMPylation. This Pelagibacter ubique (strain HTCC1062) protein is Protein nucleotidyltransferase YdiU.